The sequence spans 314 residues: Annexin-like protein RJ4 (314 aa).

Annexin repeat units follow at residues 10 to 81, 82 to 153, 165 to 236, and 240 to 311; these read FCAK…RWTL, DPAD…ALVT, KLAN…TAIR, and DPKK…TLLG. The Ca(2+) site is built by G25, G27, and E67. Ca(2+)-binding residues include I253, R255, G257, D297, and T298.

The protein belongs to the annexin (TC 1.A.31.1) family. As to expression, predominantly in developing fruit.

This is Annexin-like protein RJ4 from Fragaria ananassa (Strawberry).